Reading from the N-terminus, the 490-residue chain is ATP synthase subunit beta, chloroplastic (490 aa).

170–177 (GGXGVGKT) contacts ATP.

It belongs to the ATPase alpha/beta chains family. F-type ATPases have 2 components, CF(1) - the catalytic core - and CF(0) - the membrane proton channel. CF(1) has five subunits: alpha(3), beta(3), gamma(1), delta(1), epsilon(1). CF(0) has four main subunits: a(1), b(1), b'(1) and c(9-12).

The protein localises to the plastid. It localises to the chloroplast thylakoid membrane. It carries out the reaction ATP + H2O + 4 H(+)(in) = ADP + phosphate + 5 H(+)(out). Produces ATP from ADP in the presence of a proton gradient across the membrane. The catalytic sites are hosted primarily by the beta subunits. This is ATP synthase subunit beta, chloroplastic from Ipomoea coccinea (Scarlet morning-glory).